A 389-amino-acid chain; its full sequence is 5-hydroxytryptamine receptor 1B (389 aa).

Topologically, residues 1 to 45 (MGNPEASCTPPAVLGSQTGLPHANVSAPPNNCSAPSHIYQDSIAL) are extracellular. N-linked (GlcNAc...) asparagine glycans are attached at residues asparagine 24 and asparagine 31. A helical transmembrane segment spans residues 46–71 (PWKVLLVVLLALITLATTLSNAFVIA). Residues 72-85 (TVYRTRKLHTPANY) lie on the Cytoplasmic side of the membrane. The chain crosses the membrane as a helical span at residues 86 to 110 (LIASLAFTDLLVSILVMPISTMYTV). At 111-118 (TGRWTLGQ) the chain is on the extracellular side. Residues 119 to 144 (ALCDFWLSSDITCCTASIMHLCVIAL) traverse the membrane as a helical segment. Residues cysteine 121 and cysteine 198 are joined by a disulfide bond. Residues aspartate 128 and threonine 133 each contribute to the ergotamine site. The short motif at 145–147 (DRY) is the DRY motif; important for ligand-induced conformation changes and signaling element. The Cytoplasmic portion of the chain corresponds to 145-164 (DRYWAITDAVGYSAKRTPRR). Residues 165 to 183 (AAGMIALVWVFSICISLPP) traverse the membrane as a helical segment. The Extracellular segment spans residues 184–204 (FFWRQAKAEEEVLDCLVNTDH). Valine 200 provides a ligand contact to ergotamine. A helical transmembrane segment spans residues 205-228 (VLYTVYSTGGAFYLPTLLLIALYG). At 229-314 (RIYVEARSRI…AARERKATKT (86 aa)) the chain is on the cytoplasmic side. Residues 315–336 (LGVILGAFIVCWLPFFIISLVM) traverse the membrane as a helical segment. Over 337-346 (PICKDACWFH) the chain is Extracellular. The helical transmembrane segment at 347–369 (MAIFDFFTWLGYLNSLINPIIYT) threads the bilayer. The NPxxY motif; important for ligand-induced conformation changes and signaling signature appears at 364–368 (NPIIY). The Cytoplasmic segment spans residues 370–389 (MSNEDFKQAFHKLIRFKCTT). Residue cysteine 387 is the site of S-palmitoyl cysteine attachment.

It belongs to the G-protein coupled receptor 1 family. Homodimer. Heterodimer with HTR1D. In terms of processing, phosphorylated. Desensitization of the receptor may be mediated by its phosphorylation. Post-translationally, palmitoylated.

The protein resides in the cell membrane. In terms of biological role, G-protein coupled receptor for 5-hydroxytryptamine (serotonin). Also functions as a receptor for ergot alkaloid derivatives, various anxiolytic and antidepressant drugs and other psychoactive substances, such as lysergic acid diethylamide (LSD). Ligand binding causes a conformation change that triggers signaling via guanine nucleotide-binding proteins (G proteins) and modulates the activity of downstream effectors, such as adenylate cyclase. HTR1B is coupled to G(i)/G(o) G alpha proteins and mediates inhibitory neurotransmission by inhibiting adenylate cyclase activity. Arrestin family members inhibit signaling via G proteins and mediate activation of alternative signaling pathways. Regulates the release of 5-hydroxytryptamine, dopamine and acetylcholine in the brain, and thereby affects neural activity, nociceptive processing, pain perception, mood and behavior. Besides, plays a role in vasoconstriction of cerebral arteries. This chain is 5-hydroxytryptamine receptor 1B (HTR1B), found in Cavia porcellus (Guinea pig).